We begin with the raw amino-acid sequence, 206 residues long: Small ribosomal subunit protein uS5 (206 aa).

Over residues 1–23 (MTDTPTKQENQSKTENPPSSNAN) the composition is skewed to polar residues. Positions 1–52 (MTDTPTKQENQSKTENPPSSNANEQRRGNRNNDRKRNRRGDSKNERDSEWQE) are disordered. The segment covering 24-52 (EQRRGNRNNDRKRNRRGDSKNERDSEWQE) has biased composition (basic and acidic residues). The S5 DRBM domain occupies 50 to 113 (WQERVVQIRR…SDGKKHLVRV (64 aa)).

This sequence belongs to the universal ribosomal protein uS5 family. Part of the 30S ribosomal subunit. Contacts proteins S4 and S8.

With S4 and S12 plays an important role in translational accuracy. Its function is as follows. Located at the back of the 30S subunit body where it stabilizes the conformation of the head with respect to the body. This is Small ribosomal subunit protein uS5 from Prochlorococcus marinus subsp. pastoris (strain CCMP1986 / NIES-2087 / MED4).